Here is a 70-residue protein sequence, read N- to C-terminus: DNA-directed RNA polymerase subunit omega (70 aa).

Belongs to the RNA polymerase subunit omega family. In terms of assembly, the RNAP catalytic core consists of 2 alpha, 1 beta, 1 beta' and 1 omega subunit. When a sigma factor is associated with the core the holoenzyme is formed, which can initiate transcription.

It carries out the reaction RNA(n) + a ribonucleoside 5'-triphosphate = RNA(n+1) + diphosphate. Its function is as follows. Promotes RNA polymerase assembly. Latches the N- and C-terminal regions of the beta' subunit thereby facilitating its interaction with the beta and alpha subunits. The protein is DNA-directed RNA polymerase subunit omega of Bacillus cereus (strain B4264).